The primary structure comprises 362 residues: Aminomethyltransferase (362 aa).

The protein belongs to the GcvT family. In terms of assembly, the glycine cleavage system is composed of four proteins: P, T, L and H.

The catalysed reaction is N(6)-[(R)-S(8)-aminomethyldihydrolipoyl]-L-lysyl-[protein] + (6S)-5,6,7,8-tetrahydrofolate = N(6)-[(R)-dihydrolipoyl]-L-lysyl-[protein] + (6R)-5,10-methylene-5,6,7,8-tetrahydrofolate + NH4(+). In terms of biological role, the glycine cleavage system catalyzes the degradation of glycine. The sequence is that of Aminomethyltransferase from Listeria monocytogenes serotype 4b (strain CLIP80459).